A 436-amino-acid polypeptide reads, in one-letter code: F-box/LRR-repeat protein 20 (436 aa).

Residues 22–68 (AVINKKLPKELLLRIFSFLDVVTLCRCAQVSRAWNVLALDGSNWQRI) enclose the F-box domain. 13 LRR repeats span residues 74–100 (QRDI…SLRG), 101–126 (CLGV…SLNG), 127–152 (CTKT…DLAS), 153–178 (CTSI…NISW), 179–204 (CDQV…FLKG), 205–230 (CTQL…NLQT), 231–256 (CLQI…CASG), 257–282 (CSNI…EVAR), 283–308 (CSQL…DLEE), 309–334 (CVQI…SLSH), 335–363 (CELI…ELDN), 364–388 (CPLI…ELYD), and 389–414 (CQQI…AYFA). T417 carries the phosphothreonine modification. S421 carries the phosphoserine modification.

As to quaternary structure, interacts with SKP1 and CUL1. In terms of tissue distribution, highly expressed in brain.

Its subcellular location is the cytoplasm. Substrate-recognition component of the SCF (SKP1-CUL1-F-box protein)-type E3 ubiquitin ligase complex. Isoform 3 regulates neural transmission by binding and ubiquitinating RIMS1, a modulator of presynaptic plasticity. The polypeptide is F-box/LRR-repeat protein 20 (Fbxl20) (Mus musculus (Mouse)).